Consider the following 474-residue polypeptide: ATP synthase subunit beta, chloroplastic (474 aa).

155–162 (GGAGVGKT) provides a ligand contact to ATP.

The protein belongs to the ATPase alpha/beta chains family. In terms of assembly, F-type ATPases have 2 components, CF(1) - the catalytic core - and CF(0) - the membrane proton channel. CF(1) has five subunits: alpha(3), beta(3), gamma(1), delta(1), epsilon(1). CF(0) has four main subunits: a(1), b(1), b'(1) and c(9-12).

The protein resides in the plastid. It localises to the chloroplast thylakoid membrane. The catalysed reaction is ATP + H2O + 4 H(+)(in) = ADP + phosphate + 5 H(+)(out). Produces ATP from ADP in the presence of a proton gradient across the membrane. The catalytic sites are hosted primarily by the beta subunits. This is ATP synthase subunit beta, chloroplastic from Thalassiosira pseudonana (Marine diatom).